Reading from the N-terminus, the 443-residue chain is ATP-dependent protease ATPase subunit HslU (443 aa).

ATP is bound by residues Ile-18, 60–65, Asp-256, Glu-321, and Arg-393; that span reads GVGKTE.

Belongs to the ClpX chaperone family. HslU subfamily. As to quaternary structure, a double ring-shaped homohexamer of HslV is capped on each side by a ring-shaped HslU homohexamer. The assembly of the HslU/HslV complex is dependent on binding of ATP.

The protein localises to the cytoplasm. Functionally, ATPase subunit of a proteasome-like degradation complex; this subunit has chaperone activity. The binding of ATP and its subsequent hydrolysis by HslU are essential for unfolding of protein substrates subsequently hydrolyzed by HslV. HslU recognizes the N-terminal part of its protein substrates and unfolds these before they are guided to HslV for hydrolysis. This Escherichia coli O157:H7 (strain EC4115 / EHEC) protein is ATP-dependent protease ATPase subunit HslU.